Here is an 802-residue protein sequence, read N- to C-terminus: Oligophrenin-1 (802 aa).

The PH domain occupies 265–368 (QPTIEGYLYT…WMEAMDGKEP (104 aa)). The 185-residue stretch at 380-564 (MELNEVGFKF…ILIEHFGKIY (185 aa)) folds into the Rho-GAP domain. Disordered regions lie at residues 606 to 665 (SLDE…SEPC) and 681 to 802 (GTKA…GDES). The span at 617–627 (QTPNGTITSNL) shows a compositional bias: polar residues. A compositionally biased stretch (basic and acidic residues) spans 716 to 732 (HHKEGDTDGFSKVRPPG).

Interacts with HOMER1. Interacts with AMPA receptor complexes. Interacts with SH3GL2 (endophilin-A1). Interacts (via C-terminus) with NR1D1.

The protein resides in the postsynapse. It is found in the presynapse. The protein localises to the cell projection. It localises to the axon. Its subcellular location is the dendritic spine. The protein resides in the dendrite. It is found in the cytoplasm. Stimulates GTP hydrolysis of members of the Rho family. Its action on RHOA activity and signaling is implicated in growth and stabilization of dendritic spines, and therefore in synaptic function. Critical for the stabilization of AMPA receptors at postsynaptic sites. Critical for the regulation of synaptic vesicle endocytosis at presynaptic terminals. Required for the localization of NR1D1 to dendrites, can suppress its repressor activity and protect it from proteasomal degradation. In Mus musculus (Mouse), this protein is Oligophrenin-1 (Ophn1).